The chain runs to 195 residues: Imidazoleglycerol-phosphate dehydratase (195 aa).

Belongs to the imidazoleglycerol-phosphate dehydratase family.

It is found in the cytoplasm. The enzyme catalyses D-erythro-1-(imidazol-4-yl)glycerol 3-phosphate = 3-(imidazol-4-yl)-2-oxopropyl phosphate + H2O. It participates in amino-acid biosynthesis; L-histidine biosynthesis; L-histidine from 5-phospho-alpha-D-ribose 1-diphosphate: step 6/9. In Geobacillus sp. (strain WCH70), this protein is Imidazoleglycerol-phosphate dehydratase.